The following is a 651-amino-acid chain: p-hydroxybenzoic acid efflux pump subunit AaeB (651 aa).

A run of 11 helical transmembrane segments spans residues 11–31, 41–61, 67–87, 91–111, 119–139, 150–170, 368–388, 405–425, 429–449, 455–475, and 481–501; these read FAFKLSFAIVAALFLGFHLQL, AAIVSAGPAFAAGGEPFSGAI, LRIIGTFIGCIGGLVIIVLTI, VLTLMLCCLWAGICTWISSLV, FGLAGYTALIIIVTTGETPLL, EIVLGIVCAVMADLLFSPRSI, LFWLWTGWTSGAGCMVMIAVV, FLVGVIIALPIGALYFMFIIP, QSMLLLCISLGVLAFIIGIEV, GSLGTLASTINIIVLSNPMIF, and LDSALGQIVGCFVSLIVLLLI.

It belongs to the aromatic acid exporter ArAE (TC 2.A.85) family.

The protein localises to the cell inner membrane. Functionally, forms an efflux pump with AaeA. Could function as a metabolic relief valve, allowing to eliminate certain compounds when they accumulate to high levels in the cell. In Yersinia pseudotuberculosis serotype O:1b (strain IP 31758), this protein is p-hydroxybenzoic acid efflux pump subunit AaeB.